The sequence spans 469 residues: Ribosomal protein uS12 methylthiotransferase RimO (469 aa).

An MTTase N-terminal domain is found at 1-115 (MKFHIITLGC…IGSVVAGGVA (115 aa)). Residues Cys-10, Cys-46, Cys-78, Cys-180, Cys-184, and Cys-187 each contribute to the [4Fe-4S] cluster site. The Radical SAM core domain occupies 166–398 (NKRGPSAYLK…MAVQQVISRA (233 aa)). Positions 401–469 (ARFVGQTMKV…TDYDLWGEIV (69 aa)) constitute a TRAM domain.

It belongs to the methylthiotransferase family. RimO subfamily. It depends on [4Fe-4S] cluster as a cofactor.

The protein resides in the cytoplasm. The enzyme catalyses L-aspartate(89)-[ribosomal protein uS12]-hydrogen + (sulfur carrier)-SH + AH2 + 2 S-adenosyl-L-methionine = 3-methylsulfanyl-L-aspartate(89)-[ribosomal protein uS12]-hydrogen + (sulfur carrier)-H + 5'-deoxyadenosine + L-methionine + A + S-adenosyl-L-homocysteine + 2 H(+). Functionally, catalyzes the methylthiolation of an aspartic acid residue of ribosomal protein uS12. This Herpetosiphon aurantiacus (strain ATCC 23779 / DSM 785 / 114-95) protein is Ribosomal protein uS12 methylthiotransferase RimO.